Reading from the N-terminus, the 168-residue chain is MKHRVVGRRLDRTTEHRTAMLRNMVTSLLRHERIVTTTPKAKELKRFADKVITLAKRGSAHHRRLANREVKDVEVLNKLFDSIAGRFKARPGGYTRIVRVGRRAGDNADMSVIELVDRAAAEAEGGEEKAEQKTEKKAAKAKEPKAAKAPKKAAAKPKAKAEKKGAEE.

The span at 121-146 shows a compositional bias: basic and acidic residues; that stretch reads AEAEGGEEKAEQKTEKKAAKAKEPKA. The tract at residues 121-168 is disordered; sequence AEAEGGEEKAEQKTEKKAAKAKEPKAAKAPKKAAAKPKAKAEKKGAEE. Residues 148 to 158 show a composition bias toward basic residues; sequence KAPKKAAAKPK. Over residues 159 to 168 the composition is skewed to basic and acidic residues; that stretch reads AKAEKKGAEE.

The protein belongs to the bacterial ribosomal protein bL17 family. In terms of assembly, part of the 50S ribosomal subunit. Contacts protein L32.

In Anaeromyxobacter sp. (strain Fw109-5), this protein is Large ribosomal subunit protein bL17.